Consider the following 520-residue polypeptide: MTKRLSPHEKKNRKPASRACVFCHEKHLQCSNERPCKNCVKRGLAHECRDVIRKRAKYLNTNSRRGSEAQAHADYPHNPIDGFMSPTIKPEIPSPASNMVVSPQFVGNALLQQEVQHPQQFHPQQQQKLSLHNSMLNTTNDVLNRLLEEQNFKDTDSDNMSANSVNASRPNTAIGTGTFSSNYLNEEYLMLGDIILHSKPTSPSPSNTSVSEYNTNTVSPNFSSQINYDDLNQPRRKVLQRLKDSRPFISLGFSNESSQLPNLNSSNIAQSSSIPTEYVSPLVTHHLYQSVQDIYTNNIMNFDYPQSYHSLTHFLKKRFSGNNLPAEQKQAKRQSLLVILKLIASYRPTFISAHKSLLKPYDLQFLEMTFQRCLIDYEKLSQLNSSPTIIWRRTGEIVSITDDLLSLLGYNLADLLSHRTFIMELMYDDESITNYFRLFKTVAVGNLHSSIITKIKLTKNQNRNVSDQTGTRRLSYELSERDHIEFCSVWTVKRDMFDLPMMIIGQFLPILPAGDGVRMY.

The segment at residues 20 to 48 is a DNA-binding region (zn(2)-C6 fungal-type); that stretch reads CVFCHEKHLQCSNERPCKNCVKRGLAHEC. The PAS domain occupies 376-445; it reads DYEKLSQLNS…FRLFKTVAVG (70 aa).

It belongs to the ERT1/acuK family.

The protein resides in the nucleus. Its function is as follows. Transcription factor which regulates nonfermentable carbon utilization. This is Glucose starvation modulator protein 1 (GSM1) from Scheffersomyces stipitis (strain ATCC 58785 / CBS 6054 / NBRC 10063 / NRRL Y-11545) (Yeast).